Consider the following 143-residue polypeptide: Protein SLC31A2 (143 aa).

Topologically, residues 1-22 (MPMHFIFSDEAVLLFDFWRVHS) are extracellular. Residues 23–43 (PTGMALSVLVVLLLAVLYEGI) traverse the membrane as a helical segment. Residues 44–93 (KVGKAKLLHKTLESLPATNSQQFILGPDQDSTGSRSTSDNRTRLRWFLCY) are Cytoplasmic-facing. At Thr-75 the chain carries Phosphothreonine. Phosphoserine is present on Ser-77. A helical membrane pass occupies residues 94 to 114 (FGQSLVHVIQVVIGYFVMLAV). Topologically, residues 115 to 119 (MSYNT) are extracellular. A helical membrane pass occupies residues 120 to 140 (WIFLGVVLGSAVGYYLAYPLL). Residues 141–143 (NMT) lie on the Cytoplasmic side of the membrane.

It belongs to the copper transporter (Ctr) (TC 1.A.56) family. SLC31A subfamily. Oligomer. Interacts with SLC31A1; this interaction stabilizes SLC31A2 and protects it from ubiquitination and the subsequent degradation. Post-translationally, ubiquitinated; ubiquitination and the subsequent proteasomal degradation are prevent by SLC31A1 that stabilizes it.

The protein localises to the membrane. Its subcellular location is the cytoplasmic vesicle membrane. It localises to the late endosome membrane. It is found in the lysosome membrane. The protein resides in the recycling endosome membrane. In terms of biological role, does not function as a copper(1+) importer in vivo. However, in vitro functions as a low-affinity copper(1+) importer. Regulator of SLC31A1 which facilitates the cleavage of the SLC31A1 ecto-domain or which stabilizes the truncated form of SLC31A1 (Truncated CTR1 form), thereby drives the SLC31A1 truncated form-dependent endosomal copper export and modulates the copper and cisplatin accumulation via SLC31A1. The sequence is that of Protein SLC31A2 from Mus musculus (Mouse).